We begin with the raw amino-acid sequence, 254 residues long: uncharacterized protein (254 aa).

This is an uncharacterized protein from Methanocaldococcus jannaschii (strain ATCC 43067 / DSM 2661 / JAL-1 / JCM 10045 / NBRC 100440) (Methanococcus jannaschii).